We begin with the raw amino-acid sequence, 629 residues long: tRNA uridine 5-carboxymethylaminomethyl modification enzyme MnmG (629 aa).

FAD is bound by residues 13-18 (GGGHAG), V125, and S180. 273–287 (GPRYCPSIEDKVMRF) provides a ligand contact to NAD(+). Q370 is a binding site for FAD.

Belongs to the MnmG family. As to quaternary structure, homodimer. Heterotetramer of two MnmE and two MnmG subunits. Requires FAD as cofactor.

Its subcellular location is the cytoplasm. Functionally, NAD-binding protein involved in the addition of a carboxymethylaminomethyl (cmnm) group at the wobble position (U34) of certain tRNAs, forming tRNA-cmnm(5)s(2)U34. The protein is tRNA uridine 5-carboxymethylaminomethyl modification enzyme MnmG of Escherichia coli (strain SMS-3-5 / SECEC).